We begin with the raw amino-acid sequence, 110 residues long: Multidrug transporter EmrE (110 aa).

4 helical membrane-spanning segments follow: residues 4–21, 34–52, 58–80, and 87–104; these read YIYL…TTLM, VGTI…QTLA, IAYA…GFFG, and AIIG…INLL.

It belongs to the drug/metabolite transporter (DMT) superfamily. Small multidrug resistance (SMR) (TC 2.A.7.1) family. Homodimer. Forms an antiparallel dimeric structure. Also forms dimers of homodimers.

The protein localises to the cell inner membrane. Its activity is regulated as follows. Substrate identity influences both the ground-state and transition-state energies for the conformational exchange process, emphasizing the coupling between substrate binding and transport. In terms of biological role, multidrug efflux protein that confers resistance to a wide range of toxic compounds, including ethidium, methyl viologen, acriflavine, tetraphenylphosphonium (TPP(+)), benzalkonium, propidium, dequalinium and the aminoglycoside antibiotics streptomycin and tobramycin. Can also transport the osmoprotectants betaine and choline. The drug efflux is coupled to an influx of protons. Can couple antiport of a drug to either one or two protons, performing both electrogenic and electroneutral transport of a single substrate. Simultaneously binds and cotransports proton and drug. In Escherichia coli (strain K12), this protein is Multidrug transporter EmrE (emrE).